The chain runs to 267 residues: Tryptophan synthase alpha chain (267 aa).

Residues E49 and D60 each act as proton acceptor in the active site.

Belongs to the TrpA family. In terms of assembly, tetramer of two alpha and two beta chains.

The catalysed reaction is (1S,2R)-1-C-(indol-3-yl)glycerol 3-phosphate + L-serine = D-glyceraldehyde 3-phosphate + L-tryptophan + H2O. It functions in the pathway amino-acid biosynthesis; L-tryptophan biosynthesis; L-tryptophan from chorismate: step 5/5. Its function is as follows. The alpha subunit is responsible for the aldol cleavage of indoleglycerol phosphate to indole and glyceraldehyde 3-phosphate. The polypeptide is Tryptophan synthase alpha chain (Citrifermentans bemidjiense (strain ATCC BAA-1014 / DSM 16622 / JCM 12645 / Bem) (Geobacter bemidjiensis)).